Consider the following 732-residue polypeptide: Acylamino-acid-releasing enzyme (732 aa).

A Blocked amino end (Met); alternate modification is found at Met-1. At Met-1 the chain carries N-acetylmethionine; alternate. Phosphoserine occurs at positions 185 and 187. Catalysis depends on charge relay system residues Ser-587, Asp-675, and His-707.

Belongs to the peptidase S9C family. As to quaternary structure, homotetramer.

It localises to the cytoplasm. The enzyme catalyses Cleavage of an N-acetyl or N-formyl amino acid from the N-terminus of a polypeptide.. Its activity is regulated as follows. Homotetramerization is required for activity. Tetramerization results in the formation of a gated channel which is involved in substrate selection and substrate access to the catalytic sites. Its function is as follows. This enzyme catalyzes the hydrolysis of the N-terminal peptide bond of an N-acetylated peptide to generate an N-acetylated amino acid and a peptide with a free N-terminus. It preferentially cleaves off Ac-Ala, Ac-Met and Ac-Ser. Also, involved in the degradation of oxidized and glycated proteins. The sequence is that of Acylamino-acid-releasing enzyme (Apeh) from Rattus norvegicus (Rat).